We begin with the raw amino-acid sequence, 69 residues long: MFLLQFAQRVKDLSMVYEWDECNARRGYILKMLGAIDVAVAVASVPTLFVVTAISHDLMSALATPQVDR.

The helical transmembrane segment at 32–54 (MLGAIDVAVAVASVPTLFVVTAI) threads the bilayer.

Its subcellular location is the membrane. This is an uncharacterized protein from Sinorhizobium fredii (strain NBRC 101917 / NGR234).